A 454-amino-acid chain; its full sequence is Bifunctional protein GlmU (454 aa).

A pyrophosphorylase region spans residues 1–233; that stretch reads MQATPRPLAL…EAETIGINSR (233 aa). Residues 13–16, K27, Q80, 85–86, 108–110, G145, E159, N174, and N231 contribute to the UDP-N-acetyl-alpha-D-glucosamine site; these read LAAG, GT, and YGD. D110 provides a ligand contact to Mg(2+). N231 is a Mg(2+) binding site. Positions 234-254 are linker; it reads AELVRAEAQFQSQRRAALIEA. Positions 255–454 are N-acetyltransferase; sequence GVTMQAPDSV…KAIKDAKSKD (200 aa). UDP-N-acetyl-alpha-D-glucosamine is bound by residues R320 and K338. The active-site Proton acceptor is H350. Y353 and N364 together coordinate UDP-N-acetyl-alpha-D-glucosamine. Acetyl-CoA-binding positions include A367, 373–374, S392, S410, and R427; that span reads NY.

This sequence in the N-terminal section; belongs to the N-acetylglucosamine-1-phosphate uridyltransferase family. The protein in the C-terminal section; belongs to the transferase hexapeptide repeat family. Homotrimer. Mg(2+) serves as cofactor.

The protein localises to the cytoplasm. It carries out the reaction alpha-D-glucosamine 1-phosphate + acetyl-CoA = N-acetyl-alpha-D-glucosamine 1-phosphate + CoA + H(+). The enzyme catalyses N-acetyl-alpha-D-glucosamine 1-phosphate + UTP + H(+) = UDP-N-acetyl-alpha-D-glucosamine + diphosphate. Its pathway is nucleotide-sugar biosynthesis; UDP-N-acetyl-alpha-D-glucosamine biosynthesis; N-acetyl-alpha-D-glucosamine 1-phosphate from alpha-D-glucosamine 6-phosphate (route II): step 2/2. The protein operates within nucleotide-sugar biosynthesis; UDP-N-acetyl-alpha-D-glucosamine biosynthesis; UDP-N-acetyl-alpha-D-glucosamine from N-acetyl-alpha-D-glucosamine 1-phosphate: step 1/1. It functions in the pathway bacterial outer membrane biogenesis; LPS lipid A biosynthesis. Its function is as follows. Catalyzes the last two sequential reactions in the de novo biosynthetic pathway for UDP-N-acetylglucosamine (UDP-GlcNAc). The C-terminal domain catalyzes the transfer of acetyl group from acetyl coenzyme A to glucosamine-1-phosphate (GlcN-1-P) to produce N-acetylglucosamine-1-phosphate (GlcNAc-1-P), which is converted into UDP-GlcNAc by the transfer of uridine 5-monophosphate (from uridine 5-triphosphate), a reaction catalyzed by the N-terminal domain. This is Bifunctional protein GlmU from Jannaschia sp. (strain CCS1).